The sequence spans 312 residues: Glyoxylate/hydroxypyruvate reductase A (312 aa).

Arginine 227 is an active-site residue. Histidine 275 (proton donor) is an active-site residue.

Belongs to the D-isomer specific 2-hydroxyacid dehydrogenase family. GhrA subfamily.

It localises to the cytoplasm. It catalyses the reaction glycolate + NADP(+) = glyoxylate + NADPH + H(+). It carries out the reaction (R)-glycerate + NAD(+) = 3-hydroxypyruvate + NADH + H(+). The enzyme catalyses (R)-glycerate + NADP(+) = 3-hydroxypyruvate + NADPH + H(+). Catalyzes the NADPH-dependent reduction of glyoxylate and hydroxypyruvate into glycolate and glycerate, respectively. This chain is Glyoxylate/hydroxypyruvate reductase A, found in Shigella dysenteriae serotype 1 (strain Sd197).